We begin with the raw amino-acid sequence, 323 residues long: GTP 3',8-cyclase (323 aa).

The Radical SAM core domain maps to 4–226 (TFQRQINYLR…LEPFPDLATN (223 aa)). Arginine 13 provides a ligand contact to GTP. Cysteine 20 and cysteine 24 together coordinate [4Fe-4S] cluster. Residue tyrosine 26 coordinates S-adenosyl-L-methionine. Cysteine 27 lines the [4Fe-4S] cluster pocket. GTP is bound at residue arginine 63. Glycine 67 provides a ligand contact to S-adenosyl-L-methionine. Position 94 (threonine 94) interacts with GTP. Residue serine 118 coordinates S-adenosyl-L-methionine. GTP is bound at residue lysine 155. Methionine 189 is an S-adenosyl-L-methionine binding site. [4Fe-4S] cluster is bound by residues cysteine 252 and cysteine 255. Position 257-259 (257-259 (RLR)) interacts with GTP. A [4Fe-4S] cluster-binding site is contributed by cysteine 269.

It belongs to the radical SAM superfamily. MoaA family. As to quaternary structure, monomer and homodimer. Requires [4Fe-4S] cluster as cofactor.

The enzyme catalyses GTP + AH2 + S-adenosyl-L-methionine = (8S)-3',8-cyclo-7,8-dihydroguanosine 5'-triphosphate + 5'-deoxyadenosine + L-methionine + A + H(+). The protein operates within cofactor biosynthesis; molybdopterin biosynthesis. In terms of biological role, catalyzes the cyclization of GTP to (8S)-3',8-cyclo-7,8-dihydroguanosine 5'-triphosphate. The sequence is that of GTP 3',8-cyclase from Moorella thermoacetica (strain ATCC 39073 / JCM 9320).